A 182-amino-acid chain; its full sequence is Vacuolar protein sorting-associated protein 29 (182 aa).

Lys50 carries the post-translational modification N6-acetyllysine.

The protein belongs to the VPS29 family. Component of the commander complex consisting of the CCC subcomplex and the retriever subcomplex. Component of the heterotrimeric retriever complex formed by VPS26C, VPS29 and VPS35L; within the complex interacts with VPS35L. Component of the heterotrimeric retromer cargo-selective complex (CSC), also described as vacuolar protein sorting subcomplex (VPS), formed by VPS26 (VPS26A or VPS26B), VPS29 and VPS35. The CSC has a highly elongated structure with VPS26 and VPS29 binding independently at opposite distal ends of VPS35 as central platform. The CSC is believed to associate with variable sorting nexins to form functionally distinct retromer complex variants. The originally described retromer complex (also called SNX-BAR retromer) is a pentamer containing the CSC and a heterodimeric membrane-deforming subcomplex formed between SNX1 or SNX2 and SNX5 or SNX6 (also called SNX-BAR subcomplex); the respective CSC and SNX-BAR subcomplexes associate with low affinity. The CSC associates with SNX3 to form a SNX3-retromer complex. The CSC associates with SNX27, the WASH complex and the SNX-BAR subcomplex to form the SNX27-retromer complex. Interacts with VPS26A, VPS35, SNX1, SNX2, SNX3, SNX27, WASHC5. Interacts with TBC1D5; this interaction is blocked by VPS35L in the retriever complex. Interacts with SNX17; the interaction is indirect; SNX17 (via its C-terminus) interacts with the retriever complex (via VPS26C and VPS35L). Interacts with VPS26B and ANKRD27.

It localises to the cytoplasm. The protein localises to the membrane. It is found in the endosome membrane. The protein resides in the early endosome. Its subcellular location is the late endosome. Its function is as follows. Component of the commander complex that is essential for endosomal recycling of transmembrane cargos; the commander complex is composed of the CCC subcomplex and the retriever subcomplex. Component of the retriever complex, which is a heterotrimeric complex related to retromer cargo-selective complex (CSC) and essential for retromer-independent retrieval and recycling of numerous cargos such as integrin alpha-5/beta-1 (ITGA5:ITGB1). Component of the retromer cargo-selective complex (CSC). The CSC is believed to be the core functional component of retromer or respective retromer complex variants acting to prevent missorting of selected transmembrane cargo proteins into the lysosomal degradation pathway. The recruitment of the CSC to the endosomal membrane involves RAB7A and SNX3. The SNX-BAR retromer mediates retrograde transport of cargo proteins from endosomes to the trans-Golgi network (TGN) and is involved in endosome-to-plasma membrane transport for cargo protein recycling. The SNX3-retromer mediates the retrograde endosome-to-TGN transport of WLS distinct from the SNX-BAR retromer pathway. The SNX27-retromer is believed to be involved in endosome-to-plasma membrane trafficking and recycling of a broad spectrum of cargo proteins. The CSC seems to act as recruitment hub for other proteins, such as the WASH complex and TBC1D5. Required to regulate transcytosis of the polymeric immunoglobulin receptor (pIgR-pIgA). In the endosomes, retriever complex drives the retrieval and recycling of NxxY-motif-containing cargo proteins by coupling to SNX17, a cargo essential for the homeostatic maintenance of numerous cell surface proteins associated with processes that include cell migration, cell adhesion, nutrient supply and cell signaling. The recruitment of the retriever complex to the endosomal membrane involves CCC and WASH complexes. Involved in GLUT1 endosome-to-plasma membrane trafficking; the function is dependent of association with ANKRD27. The polypeptide is Vacuolar protein sorting-associated protein 29 (Rattus norvegicus (Rat)).